The chain runs to 205 residues: Glycerol-3-phosphate acyltransferase (205 aa).

5 consecutive transmembrane segments (helical) span residues 13 to 33 (LLAL…GLIL), 68 to 88 (LLLD…LWGY), 90 to 110 (ASLV…WLGF), 120 to 140 (IGVL…IWLA), and 147 to 167 (YSSL…WVLG).

The protein belongs to the PlsY family. As to quaternary structure, probably interacts with PlsX.

The protein resides in the cell inner membrane. It carries out the reaction an acyl phosphate + sn-glycerol 3-phosphate = a 1-acyl-sn-glycero-3-phosphate + phosphate. The protein operates within lipid metabolism; phospholipid metabolism. Catalyzes the transfer of an acyl group from acyl-phosphate (acyl-PO(4)) to glycerol-3-phosphate (G3P) to form lysophosphatidic acid (LPA). This enzyme utilizes acyl-phosphate as fatty acyl donor, but not acyl-CoA or acyl-ACP. This is Glycerol-3-phosphate acyltransferase from Agrobacterium fabrum (strain C58 / ATCC 33970) (Agrobacterium tumefaciens (strain C58)).